Consider the following 314-residue polypeptide: tRNA dimethylallyltransferase (314 aa).

The tract at residues 1-25 is disordered; sequence MAEEPQRSPAPTSPFAFTVPSNSLS. Position 40 to 47 (40 to 47) interacts with ATP; the sequence is GPTASGKS. 42 to 47 lines the substrate pocket; the sequence is TASGKS.

Belongs to the IPP transferase family. As to quaternary structure, monomer. Requires Mg(2+) as cofactor.

The enzyme catalyses adenosine(37) in tRNA + dimethylallyl diphosphate = N(6)-dimethylallyladenosine(37) in tRNA + diphosphate. Functionally, catalyzes the transfer of a dimethylallyl group onto the adenine at position 37 in tRNAs that read codons beginning with uridine, leading to the formation of N6-(dimethylallyl)adenosine (i(6)A). This is tRNA dimethylallyltransferase from Cereibacter sphaeroides (strain ATCC 17023 / DSM 158 / JCM 6121 / CCUG 31486 / LMG 2827 / NBRC 12203 / NCIMB 8253 / ATH 2.4.1.) (Rhodobacter sphaeroides).